A 256-amino-acid polypeptide reads, in one-letter code: ATP synthase subunit a (256 aa).

Residues 1 to 7 (MLNLFIT) constitute a propeptide, removed in mature form. 6 helical membrane-spanning segments follow: residues 33–53 (FTTF…LNLL), 92–112 (YFPL…ISMI), 122–142 (LIFI…IGLT), 148–168 (FFSL…LVLI), 188–208 (VLSG…LMSM), and 209–229 (SIIT…IVVL).

The protein belongs to the ATPase A chain family. F-type ATPases have 2 components, CF(1) - the catalytic core - and CF(0) - the membrane proton channel. CF(1) has five subunits: alpha(3), beta(3), gamma(1), delta(1), epsilon(1). CF(0) has three main subunits: a, b and c.

Its subcellular location is the mitochondrion inner membrane. In terms of biological role, mitochondrial membrane ATP synthase (F(1)F(0) ATP synthase or Complex V) produces ATP from ADP in the presence of a proton gradient across the membrane which is generated by electron transport complexes of the respiratory chain. F-type ATPases consist of two structural domains, F(1) - containing the extramembraneous catalytic core and F(0) - containing the membrane proton channel, linked together by a central stalk and a peripheral stalk. During catalysis, ATP synthesis in the catalytic domain of F(1) is coupled via a rotary mechanism of the central stalk subunits to proton translocation. Key component of the proton channel; it may play a direct role in the translocation of protons across the membrane. The protein is ATP synthase subunit a (ATP6) of Kluyveromyces lactis (strain ATCC 8585 / CBS 2359 / DSM 70799 / NBRC 1267 / NRRL Y-1140 / WM37) (Yeast).